Reading from the N-terminus, the 446-residue chain is Serine--tRNA ligase, mitochondrial (446 aa).

251 to 253 (TAE) provides a ligand contact to L-serine. ATP-binding positions include 284–286 (RAE) and Val-300. Glu-307 is an L-serine binding site. 371 to 374 (EISS) serves as a coordination point for ATP. L-serine is bound at residue Thr-407.

Belongs to the class-II aminoacyl-tRNA synthetase family. Type-1 seryl-tRNA synthetase subfamily. In terms of assembly, homodimer. The tRNA molecule binds across the dimer.

The protein localises to the mitochondrion matrix. The enzyme catalyses tRNA(Ser) + L-serine + ATP = L-seryl-tRNA(Ser) + AMP + diphosphate + H(+). Functionally, catalyzes the attachment of serine to tRNA(Ser). The chain is Serine--tRNA ligase, mitochondrial (DIA4) from Saccharomyces cerevisiae (strain ATCC 204508 / S288c) (Baker's yeast).